The following is a 115-amino-acid chain: Large ribosomal subunit protein bL19 (115 aa).

The protein belongs to the bacterial ribosomal protein bL19 family.

Functionally, this protein is located at the 30S-50S ribosomal subunit interface and may play a role in the structure and function of the aminoacyl-tRNA binding site. This chain is Large ribosomal subunit protein bL19, found in Brevibacillus brevis (strain 47 / JCM 6285 / NBRC 100599).